A 146-amino-acid polypeptide reads, in one-letter code: Large ribosomal subunit protein uL15 (146 aa).

Positions 1-10 are enriched in basic and acidic residues; that stretch reads MTLKLHDLRP. The disordered stretch occupies residues 1 to 41; sequence MTLKLHDLRPARGSKTARTRVGRGDGSKGKTAGRGTKGTRA.

Belongs to the universal ribosomal protein uL15 family. As to quaternary structure, part of the 50S ribosomal subunit.

Its function is as follows. Binds to the 23S rRNA. The protein is Large ribosomal subunit protein uL15 of Mycobacterium bovis (strain BCG / Pasteur 1173P2).